Consider the following 941-residue polypeptide: Translation initiation factor IF-2 (941 aa).

Positions 170 to 209 (DAQKAEVDAQKAEAEKPVEVKADESAIEEKKRVAAEESKK) are enriched in basic and acidic residues. Disordered regions lie at residues 170-228 (DAQK…KAAA) and 252-351 (RAIK…SNFQ). Residues 256 to 269 (APEPVAPVAKPAAE) show a composition bias toward low complexity. A compositionally biased stretch (basic and acidic residues) spans 271–297 (TLHKPADKKPGEKKDEKKPAVTADKKS). Residues 299 to 308 (KSANVSSTWQ) are compositionally biased toward polar residues. Residues 441 to 610 (PRAPVVTVMG…LLQAEVLELK (170 aa)) form the tr-type G domain. The tract at residues 450-457 (GHVDHGKT) is G1. 450 to 457 (GHVDHGKT) is a GTP binding site. Positions 475-479 (GITQH) are G2. The interval 496–499 (DTPG) is G3. GTP contacts are provided by residues 496-500 (DTPGH) and 550-553 (NKID). A G4 region spans residues 550-553 (NKID). The G5 stretch occupies residues 586–588 (SAK).

The protein belongs to the TRAFAC class translation factor GTPase superfamily. Classic translation factor GTPase family. IF-2 subfamily.

It is found in the cytoplasm. Its function is as follows. One of the essential components for the initiation of protein synthesis. Protects formylmethionyl-tRNA from spontaneous hydrolysis and promotes its binding to the 30S ribosomal subunits. Also involved in the hydrolysis of GTP during the formation of the 70S ribosomal complex. In Herminiimonas arsenicoxydans, this protein is Translation initiation factor IF-2.